The following is a 208-amino-acid chain: Germin-like protein subfamily 3 member 1 (208 aa).

A signal peptide spans 1–18 (MLRTIFLLSLLFALSNAS). The cysteines at positions 23 and 38 are disulfide-linked. A Cupin type-1 domain is found at 52–198 (SGLGTPGNTT…TTFLDATTVK (147 aa)). Asn59 carries N-linked (GlcNAc...) asparagine glycosylation. His100, His102, Glu107, and His146 together coordinate Mn(2+).

The protein belongs to the germin family. In terms of assembly, may not form oligomer. Expressed during germination, and also in green shoots, etiolated seedlings and whole seedlings.

It localises to the secreted. The protein localises to the extracellular space. It is found in the apoplast. May play a role in plant defense. Probably has no oxalate oxidase activity even if the active site is conserved. This Arabidopsis thaliana (Mouse-ear cress) protein is Germin-like protein subfamily 3 member 1 (GLP1).